A 104-amino-acid chain; its full sequence is L-rhamnose mutarotase (104 aa).

Residue Tyr18 coordinates substrate. Residue His22 is the Proton donor of the active site. Residues Tyr41 and 76–77 (WW) each bind substrate.

This sequence belongs to the rhamnose mutarotase family. In terms of assembly, homodimer.

The protein resides in the cytoplasm. It catalyses the reaction alpha-L-rhamnose = beta-L-rhamnose. It participates in carbohydrate metabolism; L-rhamnose metabolism. Involved in the anomeric conversion of L-rhamnose. This chain is L-rhamnose mutarotase, found in Escherichia coli O17:K52:H18 (strain UMN026 / ExPEC).